Here is a 611-residue protein sequence, read N- to C-terminus: tRNA uridine 5-carboxymethylaminomethyl modification enzyme MnmG (611 aa).

An FAD-binding site is contributed by 14–19 (GAGHAG). Position 274 to 288 (274 to 288 (GPRYCPSIEDKIVKF)) interacts with NAD(+).

The protein belongs to the MnmG family. In terms of assembly, homodimer. Heterotetramer of two MnmE and two MnmG subunits. The cofactor is FAD.

Its subcellular location is the cytoplasm. Its function is as follows. NAD-binding protein involved in the addition of a carboxymethylaminomethyl (cmnm) group at the wobble position (U34) of certain tRNAs, forming tRNA-cmnm(5)s(2)U34. The sequence is that of tRNA uridine 5-carboxymethylaminomethyl modification enzyme MnmG from Chlamydia abortus (strain DSM 27085 / S26/3) (Chlamydophila abortus).